Here is a 246-residue protein sequence, read N- to C-terminus: E3 ubiquitin-protein ligase LubX (246 aa).

2 U-box domains span residues 36–109 (TTPT…QTNY) and 131–204 (EIPD…RKRE).

As to quaternary structure, interacts with host CLK1. Ubiquitinated in the presence of host E1 ubiquitin-activating enzyme, E2 ubiquitin-conjugating enzyme (UBE2D1 or UBE2D3) and ubiquitin.

Its subcellular location is the secreted. It is found in the host cell. The catalysed reaction is S-ubiquitinyl-[E2 ubiquitin-conjugating enzyme]-L-cysteine + [acceptor protein]-L-lysine = [E2 ubiquitin-conjugating enzyme]-L-cysteine + N(6)-ubiquitinyl-[acceptor protein]-L-lysine.. Functionally, effector proteins function to alter host cell physiology and promote bacterial survival in host tissues. This protein is an E3 ubiquitin ligase that interferes with host's ubiquitination pathway. Acts in conjunction with host E2 ubiquitin-conjugating enzymes UBE2D1 (UBCH5A) or UBE2D3 (UBCH5C), and mediates polyubiquitination of host kinase CLK1. In Legionella pneumophila subsp. pneumophila (strain Philadelphia 1 / ATCC 33152 / DSM 7513), this protein is E3 ubiquitin-protein ligase LubX (lubX).